A 151-amino-acid chain; its full sequence is Centrin-A (151 aa).

EF-hand domains lie at 80-115 and 116-151; these read DVYA…LGEA and RSDS…KKIY. Ca(2+)-binding residues include D93, D95, S97, Y99, D104, D129, N131, D133, K135, and E140.

The protein belongs to the centrin family.

The protein localises to the cytoplasm. Its subcellular location is the cytoskeleton. The protein resides in the microtubule organizing center. It is found in the centrosome. It localises to the nucleus. In terms of biological role, plays a fundamental role in microtubule-organizing center structure and function. The protein is Centrin-A (cenA) of Dictyostelium discoideum (Social amoeba).